A 785-amino-acid polypeptide reads, in one-letter code: Cation/H(+) antiporter 1 (785 aa).

The next 12 helical transmembrane spans lie at 19–39 (LNTMFIQMACILVFSQFFYLF), 44–64 (GQAGPVAQILAGIVLSLLTII), 79–99 (YYIFFSFLLRTAFVFLIGLEI), 112–132 (IVITLGSLVISGIIWLPFLWF), 143–163 (FLTFYLAFLITLSNTAAPVVI), 179–199 (LAISCGLFIEITNIFIYTIVL), 201–221 (FISGTMTADIFIYSFATGVII), 240–260 (YLSKAETLAFIILILIIALTI), 294–314 (YPIHEFVLPVYFGYIGFRFSV), 323–343 (LVLGMTVALSLLGKLLGVLFA), 352–372 (QYWLFLSTMLSVKGHIGLVLL), and 389–409 (MFVAALVIMTLLSGVITSLLL).

It belongs to the monovalent cation:proton antiporter 2 (CPA2) transporter (TC 2.A.37) family. CHX (TC 2.A.37.4) subfamily. In terms of tissue distribution, specifically expressed in pollen.

The protein resides in the membrane. Its function is as follows. May operate as a cation/H(+) antiporter. This Arabidopsis thaliana (Mouse-ear cress) protein is Cation/H(+) antiporter 1 (CHX1).